Here is a 224-residue protein sequence, read N- to C-terminus: dTTP/UTP pyrophosphatase (224 aa).

The Proton acceptor role is filled by D77.

The protein belongs to the Maf family. YhdE subfamily. It depends on a divalent metal cation as a cofactor.

Its subcellular location is the cytoplasm. It catalyses the reaction dTTP + H2O = dTMP + diphosphate + H(+). The catalysed reaction is UTP + H2O = UMP + diphosphate + H(+). Functionally, nucleoside triphosphate pyrophosphatase that hydrolyzes dTTP and UTP. May have a dual role in cell division arrest and in preventing the incorporation of modified nucleotides into cellular nucleic acids. This Dehalococcoides mccartyi (strain ATCC BAA-2266 / KCTC 15142 / 195) (Dehalococcoides ethenogenes (strain 195)) protein is dTTP/UTP pyrophosphatase.